The primary structure comprises 257 residues: MSSISMKELLEAGVHFGHQTKRWNPKMKPYIFGARNGIYIIDLQKTVRYFKSAYNFVKESAEQGNTVLFVGTKKQAQDSVAEEATRCGQYYVNQRWLGGMLTNFSTVKQSIERLKKLDAMFEDGTIEAYTKKEALKMDKEREKLEKVLGGIKNMNKLPGMMFVIDPKNEEIAVQEAKKLGIPVVAIVDTNCDPDMIDHVIPGNDDAIRAIRLLTAKIADAVQEGADARNVVLQSGAEGADDLEEALADEVACEASAD.

This sequence belongs to the universal ribosomal protein uS2 family.

The protein is Small ribosomal subunit protein uS2 of Trichlorobacter lovleyi (strain ATCC BAA-1151 / DSM 17278 / SZ) (Geobacter lovleyi).